Here is a 305-residue protein sequence, read N- to C-terminus: tRNA dimethylallyltransferase (305 aa).

9 to 16 (GPTASGKS) is an ATP binding site. 11–16 (TASGKS) serves as a coordination point for substrate. The interval 34–37 (DSKQ) is interaction with substrate tRNA.

Belongs to the IPP transferase family. Monomer. Requires Mg(2+) as cofactor.

The enzyme catalyses adenosine(37) in tRNA + dimethylallyl diphosphate = N(6)-dimethylallyladenosine(37) in tRNA + diphosphate. Functionally, catalyzes the transfer of a dimethylallyl group onto the adenine at position 37 in tRNAs that read codons beginning with uridine, leading to the formation of N6-(dimethylallyl)adenosine (i(6)A). This chain is tRNA dimethylallyltransferase, found in Anaplasma marginale (strain St. Maries).